The primary structure comprises 149 residues: Cytochrome c' (149 aa).

Positions 1-19 (MRRVLLATLMAALPAAAMA) are cleaved as a signal peptide. Heme c contacts are provided by arginine 29, threonine 89, alanine 90, cysteine 138, cysteine 141, and histidine 142.

Monomer and homodimer. In terms of processing, binds 1 heme c group covalently per subunit.

In terms of biological role, cytochrome c' is the most widely occurring bacterial c-type cytochrome. Cytochromes c' are high-spin proteins and the heme has no sixth ligand. Their exact function is not known. The polypeptide is Cytochrome c' (cycP) (Cereibacter sphaeroides (strain ATCC 17023 / DSM 158 / JCM 6121 / CCUG 31486 / LMG 2827 / NBRC 12203 / NCIMB 8253 / ATH 2.4.1.) (Rhodobacter sphaeroides)).